A 641-amino-acid polypeptide reads, in one-letter code: Probable potassium transport system protein Kup (641 aa).

Transmembrane regions (helical) follow at residues 29-49 (ISLA…LYAI), 66-86 (ILGV…LKYL), 119-139 (WVLV…AMIT), 156-176 (PAFA…LFLF), 185-205 (GALF…LGII), 231-251 (LHGF…EALY), 266-286 (WVLF…AFLL), 298-318 (ALVP…ATVI), 356-376 (IYVP…VLGF), 384-404 (AAYG…FFFV), 415-435 (VLWA…GASM), and 438-458 (LFHG…LMNT).

It belongs to the HAK/KUP transporter (TC 2.A.72) family.

The protein localises to the cell inner membrane. The enzyme catalyses K(+)(in) + H(+)(in) = K(+)(out) + H(+)(out). Transport of potassium into the cell. Likely operates as a K(+):H(+) symporter. The polypeptide is Probable potassium transport system protein Kup (Chlorobium phaeovibrioides (strain DSM 265 / 1930) (Prosthecochloris vibrioformis (strain DSM 265))).